Here is a 621-residue protein sequence, read N- to C-terminus: Replication factor A protein 1 (621 aa).

The residue at position 2 (serine 2) is an N-acetylserine. Serine 178 bears the Phosphoserine; by ATM or ATR mark. The OB DNA-binding region spans 197–284 (WTIKARVSYK…PYELNLDRDT (88 aa)). The C4-type zinc finger occupies 486–508 (CSNENCNKKVLEQPDGTWRCEKC).

This sequence belongs to the replication factor A protein 1 family. Component of the heterotrimeric canonical replication protein A complex (RPA). Interacts with POB3. The N-terminus is blocked.

Its subcellular location is the nucleus. In terms of biological role, as part of the replication protein A (RPA/RP-A), a single-stranded DNA-binding heterotrimeric complex, may play an essential role in DNA replication, recombination and repair. Binds and stabilizes single-stranded DNA intermediates, preventing complementary DNA reannealing and recruiting different proteins involved in DNA metabolism. Binds to single-stranded sequences participating in DNA replication in addition to those mediating transcriptional repression (URS1) and activation (CAR1). Stimulates the activity of a cognate strand exchange protein (SEP1). It cooperates with T-AG and DNA topoisomerase I to unwind template DNA containing the simian virus 40 origin of DNA replication. The chain is Replication factor A protein 1 (RFA1) from Saccharomyces cerevisiae (strain ATCC 204508 / S288c) (Baker's yeast).